The sequence spans 242 residues: Glutathione S-transferase 3 (242 aa).

In terms of domain architecture, GST N-terminal spans 1 to 79 (MIVLHHLKNS…HLVRKYGPSF (79 aa)). The GST C-terminal domain maps to 85–234 (DVAELEKYEL…ERYSHPPTPP (150 aa)). A Phosphoserine modification is found at Ser-228. Phosphothreonine is present on Thr-232.

Belongs to the GST superfamily. Interacts with sad1.

The protein resides in the cytoplasm. It carries out the reaction RX + glutathione = an S-substituted glutathione + a halide anion + H(+). Functionally, may have a role in the detoxification of various heavy metals. This Schizosaccharomyces pombe (strain 972 / ATCC 24843) (Fission yeast) protein is Glutathione S-transferase 3 (gst3).